We begin with the raw amino-acid sequence, 218 residues long: Glutathione S-transferase Mu 4 (218 aa).

Residues 2 to 88 (SMTLGYWDIR…YIARKHNLCG (87 aa)) enclose the GST N-terminal domain. Glutathione contacts are provided by residues 7-8 (YW), 46-50 (WLNEK), 59-60 (NL), and 72-73 (QS). Residues 90-208 (TEEEKIRVDI…KSSRFLPKPL (119 aa)) enclose the GST C-terminal domain. Tyr116 serves as a coordination point for substrate.

This sequence belongs to the GST superfamily. Mu family. As to quaternary structure, homodimer. In terms of tissue distribution, expressed in a wide variety of tissues.

It is found in the cytoplasm. The catalysed reaction is RX + glutathione = an S-substituted glutathione + a halide anion + H(+). It carries out the reaction 1-chloro-2,4-dinitrobenzene + glutathione = 2,4-dinitrophenyl-S-glutathione + chloride + H(+). The enzyme catalyses (13S,14S)-epoxy-(4Z,7Z,9E,11E,16Z,19Z)-docosahexaenoate + glutathione = (13R)-S-glutathionyl-(14S)-hydroxy-(4Z,7Z,9E,11E,16Z,19Z)-docosahexaenoate. It catalyses the reaction leukotriene C4 = leukotriene A4 + glutathione. Its function is as follows. Conjugation of reduced glutathione to a wide number of exogenous and endogenous hydrophobic electrophiles. Catalyzes the conjugation of leukotriene A4 with reduced glutathione (GSH) to form leukotriene C4. Can also catalyze the transfer of a glutathionyl group from glutathione (GSH) to 13(S),14(S)-epoxy-docosahexaenoic acid to form maresin conjugate in tissue regeneration 1 (MCTR1), a bioactive lipid mediator that possess potent anti-inflammatory and proresolving actions. This chain is Glutathione S-transferase Mu 4 (GSTM4), found in Homo sapiens (Human).